Consider the following 341-residue polypeptide: Ketol-acid reductoisomerase (NADP(+)) (341 aa).

The region spanning 1–182 (MTEMFYDDDA…GGTRAGVIKT (182 aa)) is the KARI N-terminal Rossmann domain. Residues 25 to 28 (YGSQ), Lys48, Ser51, Ser53, and 83 to 86 (DQHQ) each bind NADP(+). Residue His108 is part of the active site. Gly134 is an NADP(+) binding site. The region spanning 183 to 328 (TFTEETETDL…RELRSLFSWQ (146 aa)) is the KARI C-terminal knotted domain. Mg(2+) is bound by residues Asp191, Glu195, Glu227, and Glu231. Ser252 lines the substrate pocket.

The protein belongs to the ketol-acid reductoisomerase family. The cofactor is Mg(2+).

It carries out the reaction (2R)-2,3-dihydroxy-3-methylbutanoate + NADP(+) = (2S)-2-acetolactate + NADPH + H(+). It catalyses the reaction (2R,3R)-2,3-dihydroxy-3-methylpentanoate + NADP(+) = (S)-2-ethyl-2-hydroxy-3-oxobutanoate + NADPH + H(+). The protein operates within amino-acid biosynthesis; L-isoleucine biosynthesis; L-isoleucine from 2-oxobutanoate: step 2/4. It participates in amino-acid biosynthesis; L-valine biosynthesis; L-valine from pyruvate: step 2/4. Functionally, involved in the biosynthesis of branched-chain amino acids (BCAA). Catalyzes an alkyl-migration followed by a ketol-acid reduction of (S)-2-acetolactate (S2AL) to yield (R)-2,3-dihydroxy-isovalerate. In the isomerase reaction, S2AL is rearranged via a Mg-dependent methyl migration to produce 3-hydroxy-3-methyl-2-ketobutyrate (HMKB). In the reductase reaction, this 2-ketoacid undergoes a metal-dependent reduction by NADPH to yield (R)-2,3-dihydroxy-isovalerate. This is Ketol-acid reductoisomerase (NADP(+)) from Pseudarthrobacter chlorophenolicus (strain ATCC 700700 / DSM 12829 / CIP 107037 / JCM 12360 / KCTC 9906 / NCIMB 13794 / A6) (Arthrobacter chlorophenolicus).